The sequence spans 263 residues: uncharacterized protein (263 aa).

Belongs to the AtsA family.

Its subcellular location is the plastid. The protein resides in the chloroplast. This is an uncharacterized protein from Porphyra purpurea (Red seaweed).